The sequence spans 339 residues: MYLIEPIRNGKRITDGAVALAMQVYVQENLFLDDDILFPYYCDPKVEIGKFQNAVVETNQEYLKEHHIPVVRRDTGGGAVYVDSGAVNICYLINDNGVFGDFKRTYQPAIEALHHLGATGVEMSGRNDLVIDGKKVSGAAMTIANGRVYGGYSLLLDVDFEAMEKALKPNRKKIESKGIRSVRSRVGNIREHLAPQYQGITIEEFKDLMICQLLQIETISQAKRYDLTEKDWQQIDALTERKYHNWEWNYGNAPQYRYHRDGRFTGGTVDIHLDIKKGYIAACRIYGDFFGKADIAELEGHLIGTRMEKEDVLATLNAIDLAPYLGAITAEELGDLIFS.

In terms of domain architecture, BPL/LPL catalytic spans Phe-31–Gln-221. Residues Arg-73, Gly-78–Tyr-81, Lys-135, and Ala-139 each bind ATP. Residue Lys-135 coordinates (R)-lipoate.

This sequence belongs to the LplA family.

The catalysed reaction is L-lysyl-[lipoyl-carrier protein] + (R)-lipoate + ATP = N(6)-[(R)-lipoyl]-L-lysyl-[lipoyl-carrier protein] + AMP + diphosphate + H(+). The protein operates within protein modification; protein lipoylation via exogenous pathway; protein N(6)-(lipoyl)lysine from lipoate: step 1/2. It participates in protein modification; protein lipoylation via exogenous pathway; protein N(6)-(lipoyl)lysine from lipoate: step 2/2. Catalyzes specifically the lipoylation of GcvH-L (SpyM50867), likely via the ATP-dependent activation of lipoate to lipoyl-AMP and the transfer of the activated lipoyl onto the lipoyl domain of the target protein. The chain is Lipoate--protein ligase from Streptococcus pyogenes serotype M5 (strain Manfredo).